Consider the following 54-residue polypeptide: Large ribosomal subunit protein bL32 (54 aa).

Residues 1 to 24 (MAVQKSKPTRSKRGMRRSHDSLKE) form a disordered region. A compositionally biased stretch (basic residues) spans 7–16 (KPTRSKRGMR).

Belongs to the bacterial ribosomal protein bL32 family.

The protein is Large ribosomal subunit protein bL32 of Buchnera aphidicola subsp. Schizaphis graminum (strain Sg).